The chain runs to 37 residues: Protein YhiY (37 aa).

In Escherichia coli (strain K12), this protein is Protein YhiY.